Here is a 384-residue protein sequence, read N- to C-terminus: Transcription factor iacI (384 aa).

The protein resides in the nucleus. Transcription factor; part of the gene cluster that mediates the biosynthesis of iso-A82775C, a enylepoxycyclohexane and biosynthetic precursor of the chloropestolide anticancer natural products. The protein is Transcription factor iacI of Pestalotiopsis fici (strain W106-1 / CGMCC3.15140).